The following is a 434-amino-acid chain: APETALA2-like protein 2 (434 aa).

Residues 1 to 116 (MLLDLNVESP…KTRRGPRSRS (116 aa)) form a disordered region. A compositionally biased stretch (low complexity) spans 12 to 23 (RSGTSSSSVLNS). The span at 25 to 38 (DAGGGGGGGGGGGL) shows a compositional bias: gly residues. A compositionally biased stretch (pro residues) spans 72–87 (LPPPPPAAPSPAPAWQ). Over residues 104–113 (VAKKTRRGPR) the composition is skewed to basic residues. The Nuclear localization signal signature appears at 106-115 (KKTRRGPRSR). 2 DNA-binding regions (AP2/ERF) span residues 118 to 174 (QYRG…INFN) and 210 to 267 (KFRG…TNFE). The short motif at 291-295 (LDLRI) is the EAR element.

Belongs to the AP2/ERF transcription factor family. AP2 subfamily. As to quaternary structure, may form homodimer. Interacts with TPR2/ASP1.

It is found in the nucleus. In terms of biological role, probable transcription factor. Involved in spikelet transition. Together with SNB, controls synergistically inflorescence architecture and floral meristem establishment via the regulation of spatio-temporal expression of B- and E-function floral organ identity genes in the lodicules and of spikelet meristem genes. Prevents lemma and palea elongation as well as grain growth. The sequence is that of APETALA2-like protein 2 from Oryza sativa subsp. indica (Rice).